Here is a 359-residue protein sequence, read N- to C-terminus: Small ribosomal subunit biogenesis GTPase RsgA (359 aa).

The region spanning 101 to 259 is the CP-type G domain; it reads KRKGSQAIAS…LMDNPGIREV (159 aa). Residues 149-152 and 201-209 contribute to the GTP site; these read NKKD and GSSGAGKST. 4 residues coordinate Zn(2+): Cys-284, Cys-289, His-291, and Cys-297. Positions 331 to 359 are disordered; the sequence is DPEEARKKKQKDKQMSKALQKRLKDKGRK. The segment covering 349–359 has biased composition (basic residues); it reads LQKRLKDKGRK.

Belongs to the TRAFAC class YlqF/YawG GTPase family. RsgA subfamily. In terms of assembly, monomer. Associates with 30S ribosomal subunit, binds 16S rRNA. Zn(2+) is required as a cofactor.

The protein resides in the cytoplasm. Functionally, one of several proteins that assist in the late maturation steps of the functional core of the 30S ribosomal subunit. Helps release RbfA from mature subunits. May play a role in the assembly of ribosomal proteins into the subunit. Circularly permuted GTPase that catalyzes slow GTP hydrolysis, GTPase activity is stimulated by the 30S ribosomal subunit. This chain is Small ribosomal subunit biogenesis GTPase RsgA, found in Leptospira interrogans serogroup Icterohaemorrhagiae serovar copenhageni (strain Fiocruz L1-130).